A 511-amino-acid polypeptide reads, in one-letter code: Small ribosomal subunit protein uS4m (511 aa).

Residues 202-272 (KRLDVVLYRS…IKNNLFSNIN (71 aa)) enclose the S4 RNA-binding domain.

It belongs to the universal ribosomal protein uS4 family.

It localises to the mitochondrion. The protein is Small ribosomal subunit protein uS4m (RPS4) of Prototheca wickerhamii.